The chain runs to 173 residues: Translationally-controlled tumor protein homolog (173 aa).

Residues 1–173 enclose the TCTP domain; it reads MIIYKDILTG…WKHGLEEYKV (173 aa).

It belongs to the TCTP family.

The protein resides in the cytoplasm. It is found in the cytoskeleton. Its function is as follows. Involved in protein synthesis. Involved in microtubule stabilization. The sequence is that of Translationally-controlled tumor protein homolog from Aspergillus oryzae (strain ATCC 42149 / RIB 40) (Yellow koji mold).